The chain runs to 302 residues: UDP-N-acetylenolpyruvoylglucosamine reductase (302 aa).

The region spanning Lys31 to Arg213 is the FAD-binding PCMH-type domain. Residue Arg176 is part of the active site. Catalysis depends on Ser226, which acts as the Proton donor. Glu296 is a catalytic residue.

The protein belongs to the MurB family. FAD serves as cofactor.

It localises to the cytoplasm. The catalysed reaction is UDP-N-acetyl-alpha-D-muramate + NADP(+) = UDP-N-acetyl-3-O-(1-carboxyvinyl)-alpha-D-glucosamine + NADPH + H(+). It participates in cell wall biogenesis; peptidoglycan biosynthesis. Functionally, cell wall formation. The sequence is that of UDP-N-acetylenolpyruvoylglucosamine reductase from Carboxydothermus hydrogenoformans (strain ATCC BAA-161 / DSM 6008 / Z-2901).